Consider the following 318-residue polypeptide: Type II restriction enzyme HaeIII (318 aa).

It catalyses the reaction Endonucleolytic cleavage of DNA to give specific double-stranded fragments with terminal 5'-phosphates.. Its function is as follows. A P subtype restriction enzyme that recognizes the double-stranded sequence 5'-GGCC-3' and cleaves after G-2. This chain is Type II restriction enzyme HaeIII (haeIIIR), found in Haemophilus aegyptius.